Here is a 383-residue protein sequence, read N- to C-terminus: ATP phosphoribosyltransferase regulatory subunit (383 aa).

This sequence belongs to the class-II aminoacyl-tRNA synthetase family. HisZ subfamily. As to quaternary structure, heteromultimer composed of HisG and HisZ subunits.

Its subcellular location is the cytoplasm. It functions in the pathway amino-acid biosynthesis; L-histidine biosynthesis; L-histidine from 5-phospho-alpha-D-ribose 1-diphosphate: step 1/9. In terms of biological role, required for the first step of histidine biosynthesis. May allow the feedback regulation of ATP phosphoribosyltransferase activity by histidine. The sequence is that of ATP phosphoribosyltransferase regulatory subunit from Cupriavidus pinatubonensis (strain JMP 134 / LMG 1197) (Cupriavidus necator (strain JMP 134)).